Here is a 444-residue protein sequence, read N- to C-terminus: Serine--tRNA ligase (444 aa).

248-250 provides a ligand contact to L-serine; the sequence is TSE. 279 to 281 is an ATP binding site; the sequence is RSE. L-serine is bound at residue Glu302. 366 to 369 is an ATP binding site; sequence EISS. Position 401 (Ser401) interacts with L-serine.

Belongs to the class-II aminoacyl-tRNA synthetase family. Type-1 seryl-tRNA synthetase subfamily. Homodimer. The tRNA molecule binds across the dimer.

The protein localises to the cytoplasm. The enzyme catalyses tRNA(Ser) + L-serine + ATP = L-seryl-tRNA(Ser) + AMP + diphosphate + H(+). It catalyses the reaction tRNA(Sec) + L-serine + ATP = L-seryl-tRNA(Sec) + AMP + diphosphate + H(+). It functions in the pathway aminoacyl-tRNA biosynthesis; selenocysteinyl-tRNA(Sec) biosynthesis; L-seryl-tRNA(Sec) from L-serine and tRNA(Sec): step 1/1. Its function is as follows. Catalyzes the attachment of serine to tRNA(Ser). Is also able to aminoacylate tRNA(Sec) with serine, to form the misacylated tRNA L-seryl-tRNA(Sec), which will be further converted into selenocysteinyl-tRNA(Sec). The polypeptide is Serine--tRNA ligase (Polaromonas naphthalenivorans (strain CJ2)).